A 294-amino-acid polypeptide reads, in one-letter code: Zinc finger protein CONSTANS-LIKE 3 (294 aa).

Positions 8, 11, 31, 36, 51, 54, 74, and 79 each coordinate Zn(2+). The B box-type 1; atypical zinc finger occupies 8–50; the sequence is CDSCKSTAATLFCRADAAFLCGDCDGKIHTANKLASRHERVWL. Residues 51-93 form a B box-type 2; atypical zinc finger; sequence CEVCEQAPAHVTCKADAAALCVTCDRDIHSANPLSRRHERVPI. Positions 229-271 constitute a CCT domain; the sequence is REARVLRYREKRKNRKFEKTIRYASRKAYAEMRPRIKGRFAKR.

The protein belongs to the CONSTANS family.

Its subcellular location is the nucleus. The protein is Zinc finger protein CONSTANS-LIKE 3 (COL3) of Arabidopsis thaliana (Mouse-ear cress).